We begin with the raw amino-acid sequence, 68 residues long: Adipokinetic prohormone type 1 (68 aa).

The N-terminal stretch at 1-20 is a signal peptide; that stretch reads MNKIYFVIVFVACFCLFAEA. Pyrrolidone carboxylic acid is present on Gln-21. Gly-30 bears the Glycine amide mark. Residues 34 to 68 constitute a propeptide that is removed on maturation; it reads SGVAPMSCKNEEAVATIFKLIQNEAERFIICQQKS.

In terms of tissue distribution, expressed in antennal lobe (AL), corpora cardiaca (CC), corpora allata (CA) and gnathal ganglion (GNG) (at protein level). Expression in CC and CA detected in all animals, expression in GNG in some animals and in AL in few animals (at protein level).

The protein resides in the secreted. Its function is as follows. This hormone, released from cells in the corpora cardiaca, causes release of diglycerides from the fat body and stimulation of muscles to use these diglycerides as an energy source during energy-demanding processes. The chain is Adipokinetic prohormone type 1 from Agrotis ipsilon (Black cutworm moth).